The sequence spans 180 residues: Large ribosomal subunit protein uL5 (180 aa).

Belongs to the universal ribosomal protein uL5 family. In terms of assembly, part of the 50S ribosomal subunit; part of the 5S rRNA/L5/L18/L25 subcomplex. Contacts the 5S rRNA and the P site tRNA. Forms a bridge to the 30S subunit in the 70S ribosome.

Its function is as follows. This is one of the proteins that bind and probably mediate the attachment of the 5S RNA into the large ribosomal subunit, where it forms part of the central protuberance. In the 70S ribosome it contacts protein S13 of the 30S subunit (bridge B1b), connecting the 2 subunits; this bridge is implicated in subunit movement. Contacts the P site tRNA; the 5S rRNA and some of its associated proteins might help stabilize positioning of ribosome-bound tRNAs. The chain is Large ribosomal subunit protein uL5 from Xanthomonas oryzae pv. oryzae (strain MAFF 311018).